The sequence spans 237 residues: B3 domain-containing protein At1g20600 (237 aa).

The segment at 53–79 is disordered; that stretch reads LVSQANQKQSRKREEKTEKNQPKRVKN. The segment covering 64–73 has biased composition (basic and acidic residues); sequence KREEKTEKNQ. Residues 126 to 230 constitute a DNA-binding region (TF-B3); the sequence is KKQLMSSDVD…LEHVFIRGSK (105 aa).

Its subcellular location is the nucleus. The protein is B3 domain-containing protein At1g20600 of Arabidopsis thaliana (Mouse-ear cress).